The chain runs to 427 residues: Acyl-CoA hydrolase 2 (427 aa).

An a nucleoside 3',5'-cyclic phosphate-binding site is contributed by 15 to 83; it reads LLQKLPSSSL…FLLKQYDYFG (69 aa). Residues Asp-337, Ser-359, and Gln-409 each act as charge relay system in the active site. The short motif at 425-427 is the Microbody targeting signal element; that stretch reads SKL.

Belongs to the C/M/P thioester hydrolase family. Homotetramer. As to expression, mostly expressed in leaves and flowers, and, to a lower extent, in seedlings and siliques.

Its subcellular location is the peroxisome matrix. It catalyses the reaction a fatty acyl-CoA + H2O = a fatty acid + CoA + H(+). It carries out the reaction dodecanoyl-CoA + H2O = dodecanoate + CoA + H(+). The enzyme catalyses tetradecanoyl-CoA + H2O = tetradecanoate + CoA + H(+). The catalysed reaction is octadecanoyl-CoA + H2O = octadecanoate + CoA + H(+). It catalyses the reaction (9Z)-hexadecenoyl-CoA + H2O = (9Z)-hexadecenoate + CoA + H(+). It carries out the reaction (5Z,8Z,11Z,14Z)-eicosatetraenoyl-CoA + H2O = (5Z,8Z,11Z,14Z)-eicosatetraenoate + CoA + H(+). The enzyme catalyses hexadecanoyl-CoA + H2O = hexadecanoate + CoA + H(+). The catalysed reaction is (9Z)-octadecenoyl-CoA + H2O = (9Z)-octadecenoate + CoA + H(+). It catalyses the reaction (9Z,12Z)-octadecadienoyl-CoA + H2O = (9Z,12Z)-octadecadienoate + CoA + H(+). It participates in lipid metabolism; fatty acid metabolism. Insensitive to feedback inhibition by free coenzyme A (CoASH). Catalyzes the hydrolysis of acyl-CoAs into free fatty acids and coenzyme A (CoASH), regulating their respective intracellular levels. Active with both medium chain and long chain acyl-CoAs (e.g. 12:0-CoA, 14:0-CoA, 16:0-CoA, 18:0-CoA, 16:1-CoA, 18:1-CoA, 18:2-CoA and 20:4-CoA) as substrates, palmitoleoyl-CoA (16:1-CoA) being the favorite substrate. The polypeptide is Acyl-CoA hydrolase 2 (Arabidopsis thaliana (Mouse-ear cress)).